The sequence spans 174 residues: ATP synthase subunit b (174 aa).

The chain crosses the membrane as a helical span at residues 9–29 (LPNTSLIFWEVVTFLILLALL).

Belongs to the ATPase B chain family. As to quaternary structure, F-type ATPases have 2 components, F(1) - the catalytic core - and F(0) - the membrane proton channel. F(1) has five subunits: alpha(3), beta(3), gamma(1), delta(1), epsilon(1). F(0) has three main subunits: a(1), b(2) and c(10-14). The alpha and beta chains form an alternating ring which encloses part of the gamma chain. F(1) is attached to F(0) by a central stalk formed by the gamma and epsilon chains, while a peripheral stalk is formed by the delta and b chains.

The protein localises to the cell membrane. F(1)F(0) ATP synthase produces ATP from ADP in the presence of a proton or sodium gradient. F-type ATPases consist of two structural domains, F(1) containing the extramembraneous catalytic core and F(0) containing the membrane proton channel, linked together by a central stalk and a peripheral stalk. During catalysis, ATP synthesis in the catalytic domain of F(1) is coupled via a rotary mechanism of the central stalk subunits to proton translocation. Its function is as follows. Component of the F(0) channel, it forms part of the peripheral stalk, linking F(1) to F(0). The chain is ATP synthase subunit b from Rubrobacter xylanophilus (strain DSM 9941 / JCM 11954 / NBRC 16129 / PRD-1).